A 444-amino-acid polypeptide reads, in one-letter code: Serine carboxypeptidase-like 50 (444 aa).

A signal peptide spans 1 to 22 (MEQATTLFILLSTLLLAVSVES). Cys79 and Cys308 are joined by a disulfide. Ser170 is a catalytic residue. Asn263 carries N-linked (GlcNAc...) asparagine glycosylation. Asp345 is an active-site residue. Asn361 carries an N-linked (GlcNAc...) asparagine glycan. The active site involves His403.

The protein belongs to the peptidase S10 family. As to expression, ubiquitous.

Its subcellular location is the secreted. Functionally, probable carboxypeptidase. The protein is Serine carboxypeptidase-like 50 (SCPL50) of Arabidopsis thaliana (Mouse-ear cress).